Here is a 228-residue protein sequence, read N- to C-terminus: Homeobox protein Hox-B6a (228 aa).

An Antp-type hexapeptide motif is present at residues 132 to 137 (VYPWMQ). A DNA-binding region (homeobox) is located at residues 150–209 (GRRGRQTYTRYQTLELEKEFHFNRYLTRRRRIEIAHALCLTERQIKIWFQNRRMKWKKEN).

This sequence belongs to the Antp homeobox family.

It is found in the nucleus. Its function is as follows. Sequence-specific transcription factor which is part of a developmental regulatory system that provides cells with specific positional identities on the anterior-posterior axis. In Danio rerio (Zebrafish), this protein is Homeobox protein Hox-B6a (hoxb6a).